A 505-amino-acid polypeptide reads, in one-letter code: MSTFGAEVDQVWPAVTGDSPHLTNFGRKLLKDCRQVQKPIGGYENLGNVIKLSAEFPLEFGVNSVKVYRQSPSRLARINEEVASAYPLIHERTLGLYLQYLEHKCRWGNAVEKPIYRNLSLCGFVQRLLVKRCASFFARNDKYLLVSGESGASGFEAVGTREEKAPLVLANVLSYDDIKLSALLSVSSRTEFVNEGERTNCGHVDLNTKTLERHGVIVGMIGARLSRRNLMEFQDIVIARQQNTRERGYGMALDEPATTRDEDYRRLWREFYATRDLIHGQAVIDNQRFGPSKNKMDVFDNLVMKRRYAISFDMLLLEAEARAKRVKKLAYIHVVGFGLGVWKAAEQQERIFMETFEQRMRTLGNRLNNVGLVHFSWFSITHCGGLSNGSLIEIPGHPKDGIRVLISKRNPARKLSDPEHAGMLLVVSYAWDGNALPGNEFWMKMLQSTGDSSTACSTLVAELHNPYINTKFCNGGNLHIASPEHGVLHIAEYAKRVIRSESDAL.

Residues arginine 198, glycine 336, glycine 338, glycine 340, valine 341, tryptophan 342, tryptophan 377, aspartate 432, asparagine 439, glutamate 440, glycine 450, and aspartate 451 each coordinate ADP-D-ribose.

It catalyses the reaction N(omega)-(ADP-D-ribosyl)-L-arginyl-[protein] + H2O = ADP-D-ribose + L-arginyl-[protein]. The catalysed reaction is N(omega)-(ADP-D-ribosyl)-L-arginine + H2O = ADP-D-ribose + L-arginine. Protein ADP-ribosyl hydrolase that specifically removes mono-ADP-ribosyl modifications from protein arginine residues. The sequence is that of ADP-ribosylarginine hydrolase CG2909 from Drosophila melanogaster (Fruit fly).